Consider the following 26-residue polypeptide: Neprilysin (26 aa).

It belongs to the peptidase M13 family. Zn(2+) is required as a cofactor.

The protein localises to the cell membrane. The enzyme catalyses Preferential cleavage of polypeptides between hydrophobic residues, particularly with Phe or Tyr at P1'.. The catalysed reaction is substance P + H2O = substance P(1-9) + L-Leu-L-Met-NH2. It catalyses the reaction substance P + H2O = substance P(1-7) + L-Phe-Gly-L-Leu-L-Met-NH2. It carries out the reaction neurotensin + H2O = neurotensin(1-11) + L-isoleucyl-L-leucine. The enzyme catalyses neurotensin + H2O = neurotensin(1-10) + L-tyrosyl-L-isoleucyl-L-leucine. Functionally, thermolysin-like specificity, but is almost confined on acting on polypeptides of up to 30 amino acids. Biologically important in the destruction of opioid peptides such as Met- and Leu-enkephalins by cleavage of a Gly-Phe bond. Catalyzes cleavage of bradykinin, substance P and neurotensin peptides. Able to cleave angiotensin-1, angiotensin-2 and angiotensin 1-9. Involved in the degradation of atrial natriuretic factor (ANF) and brain natriuretic factor (BNP(1-32)). Displays UV-inducible elastase activity toward skin preelastic and elastic fibers. This is Neprilysin (MME) from Sus scrofa (Pig).